A 453-amino-acid chain; its full sequence is 3-phosphoshikimate 1-carboxyvinyltransferase (453 aa).

The interval 1–25 (MSHDSEPQPVTAHPAGPLTGALKPP) is disordered. Residues lysine 28, serine 29, and arginine 33 each contribute to the 3-phosphoshikimate site. Residue lysine 28 participates in phosphoenolpyruvate binding. The phosphoenolpyruvate site is built by glycine 101 and arginine 129. Positions 175, 177, 330, and 357 each coordinate 3-phosphoshikimate. Glutamine 177 is a phosphoenolpyruvate binding site. The active-site Proton acceptor is aspartate 330. The phosphoenolpyruvate site is built by arginine 361 and arginine 405.

It belongs to the EPSP synthase family. As to quaternary structure, monomer.

The protein resides in the cytoplasm. The enzyme catalyses 3-phosphoshikimate + phosphoenolpyruvate = 5-O-(1-carboxyvinyl)-3-phosphoshikimate + phosphate. The protein operates within metabolic intermediate biosynthesis; chorismate biosynthesis; chorismate from D-erythrose 4-phosphate and phosphoenolpyruvate: step 6/7. Catalyzes the transfer of the enolpyruvyl moiety of phosphoenolpyruvate (PEP) to the 5-hydroxyl of shikimate-3-phosphate (S3P) to produce enolpyruvyl shikimate-3-phosphate and inorganic phosphate. In Methylorubrum populi (strain ATCC BAA-705 / NCIMB 13946 / BJ001) (Methylobacterium populi), this protein is 3-phosphoshikimate 1-carboxyvinyltransferase.